A 492-amino-acid polypeptide reads, in one-letter code: Linolenate hydroperoxide lyase, chloroplastic (492 aa).

The disordered stretch occupies residues 1–33 (MLLRTMAATSPRPPPSTSLTSQQPPSPPSQLPL). Residues 1-34 (MLLRTMAATSPRPPPSTSLTSQQPPSPPSQLPLR) constitute a chloroplast transit peptide. Heme is bound at residue Cys454.

The protein belongs to the cytochrome P450 family. It depends on heme as a cofactor. As to expression, expressed in roots, leaves, flowers and siliques.

It is found in the plastid. The protein resides in the chloroplast. Functionally, catalyzes the conversion of (9Z,11E,15Z)-(13S)-hydroperoxyoctadeca-9,11,15-trienoate to (9Z)-12-oxo-dodec-9-enoate and cis-3-hexenal. Possesses low activity toward (9Z,11E)-(13S)-13-hydroperoxyoctadeca-9,11-dienoate. Required for the synthesis of the green leaf volatiles (GLVs) hexanal and trans-2-hexenal. This chain is Linolenate hydroperoxide lyase, chloroplastic, found in Arabidopsis thaliana (Mouse-ear cress).